A 150-amino-acid polypeptide reads, in one-letter code: Ribosomal RNA large subunit methyltransferase H (150 aa).

S-adenosyl-L-methionine-binding positions include A100 and 118–123; that span reads LSEMTF.

Belongs to the RNA methyltransferase RlmH family. Homodimer.

It localises to the cytoplasm. The enzyme catalyses pseudouridine(1915) in 23S rRNA + S-adenosyl-L-methionine = N(3)-methylpseudouridine(1915) in 23S rRNA + S-adenosyl-L-homocysteine + H(+). In terms of biological role, specifically methylates the pseudouridine at position 1915 (m3Psi1915) in 23S rRNA. This is Ribosomal RNA large subunit methyltransferase H from Helicobacter pylori (strain HPAG1).